The following is a 314-amino-acid chain: Replication initiation protein (314 aa).

Belongs to the plasmid replication initiation factor family.

This protein is probably a specific topoisomerase involved in initiating replication. This protein is specifically required and may be rate-limiting for replication of the plasmid in vivo. The protein is Replication initiation protein (repC) of Staphylococcus aureus.